We begin with the raw amino-acid sequence, 142 residues long: Ribosome-binding factor A (142 aa).

A disordered region spans residues threonine 120 to threonine 142. Residues glutamate 123–threonine 142 show a composition bias toward polar residues.

This sequence belongs to the RbfA family. Monomer. Binds 30S ribosomal subunits, but not 50S ribosomal subunits or 70S ribosomes.

The protein localises to the cytoplasm. In terms of biological role, one of several proteins that assist in the late maturation steps of the functional core of the 30S ribosomal subunit. Associates with free 30S ribosomal subunits (but not with 30S subunits that are part of 70S ribosomes or polysomes). Required for efficient processing of 16S rRNA. May interact with the 5'-terminal helix region of 16S rRNA. The chain is Ribosome-binding factor A from Prochlorococcus marinus (strain MIT 9313).